Here is a 483-residue protein sequence, read N- to C-terminus: MNAIQSDLYAALPEIIILCMAMFVLLLDLFLKSHNRSLIYIFTQLGLAAAAVVTACTHNVSVVSYAFNGMFVDDPLSDVLKLMMYLTTSVMLVYTRQYVSLRDMFRGEYFALTLFALLGMMIMVSGQHFLTLYMGLELLSLCLYALVAMDRDNPRATEAAMKYFVLGALSSGMLLYGMSMLYGVTGTLDVAEVANALLQGAPDHAVLVLGVVFLIAGLGFKLGAVPFQMWVPDVYHGAPTAVTLFIGSVTKLAAFAFMIRLLIQGLYVLAIDWQGMLAIMAVLSILIGNITAIAQTNLKRMLAYSTISHVGYLLYGFMSAGTNGYVSAMFYIMAYVLMTLGGFGIMLLLSRKGFEADNLEDLKGLNQRSPWYAFLMLIIMFSMAGVPPTLGFYAKFAVLQAALQAGFVGLVIFAVVMAAIGGFYYLRVVKLMYFDEPLDNTPIKAPIDMKVLLSLNALLLLALGMFPQRLMDICAYAITHSFQ.

The next 13 helical transmembrane spans lie at Ala-11–Leu-31, Ser-37–Thr-57, Leu-82–Ser-100, Phe-110–Leu-130, Phe-164–Val-184, Ala-205–Val-225, Pro-239–Ile-259, Val-268–Gly-288, Met-301–Gly-321, Met-329–Leu-349, Tyr-372–Phe-392, Gly-406–Leu-426, and Pro-446–Phe-466.

This sequence belongs to the complex I subunit 2 family. In terms of assembly, NDH-1 is composed of 14 different subunits. Subunits NuoA, H, J, K, L, M, N constitute the membrane sector of the complex.

Its subcellular location is the cell inner membrane. It catalyses the reaction a quinone + NADH + 5 H(+)(in) = a quinol + NAD(+) + 4 H(+)(out). In terms of biological role, NDH-1 shuttles electrons from NADH, via FMN and iron-sulfur (Fe-S) centers, to quinones in the respiratory chain. The immediate electron acceptor for the enzyme in this species is believed to be ubiquinone. Couples the redox reaction to proton translocation (for every two electrons transferred, four hydrogen ions are translocated across the cytoplasmic membrane), and thus conserves the redox energy in a proton gradient. This Methylovorus glucosotrophus (strain SIP3-4) protein is NADH-quinone oxidoreductase subunit N.